Here is a 439-residue protein sequence, read N- to C-terminus: Perilipin-3 (439 aa).

The segment covering 1–19 (MFASETEASASSTQVTTEE) has biased composition (low complexity). Positions 1-26 (MFASETEASASSTQVTTEEPVQQPSV) are disordered. K66 carries the post-translational modification N6-acetyllysine. A Phosphoserine modification is found at S92. A Glycyl lysine isopeptide (Lys-Gly) (interchain with G-Cter in SUMO1) cross-link involves residue K123. Position 131 is a phosphoserine (S131). T175 is subject to Phosphothreonine. 2 positions are modified to phosphoserine: S180 and S184. Position 221 is a phosphothreonine (T221). Phosphoserine occurs at positions 222 and 246. Coiled-coil stretches lie at residues 254–282 (RAYE…QALS) and 358–381 (AHVK…FSGM). Y256 is modified (phosphotyrosine).

The protein belongs to the perilipin family. Homooligomer. Interacts with M6PR (via the cytoplasmic domain). Interacts with IGF2R (via the cytoplasmic domain). In terms of processing, phosphorylation at Tyr-256 by isoform 1 of CHKA (CHKalpha2) promotes dissociation from lipid droplets: dissociation is followed by recruitment of autophagosome machinery to lipid droplets and subsequent lipid droplet lipolysis.

The protein localises to the lipid droplet. The protein resides in the endosome membrane. Its subcellular location is the cytoplasm. Functionally, structural component of lipid droplets, which is required for the formation and maintenance of lipid storage droplets. Required for the transport of mannose 6-phosphate receptors (MPR) from endosomes to the trans-Golgi network. This chain is Perilipin-3 (PLIN3), found in Sus scrofa (Pig).